Consider the following 169-residue polypeptide: uncharacterized protein (169 aa).

The 62-residue stretch at 18 to 79 (LDRADVALLN…IVSPKAVGRP (62 aa)) folds into the HTH asnC-type domain. Residues 37–56 (SEELADKVGLSPTACQRRLK) constitute a DNA-binding region (H-T-H motif).

This is an uncharacterized protein from Sinorhizobium fredii (strain NBRC 101917 / NGR234).